The chain runs to 157 residues: Crossover junction endodeoxyribonuclease RuvC (157 aa).

Residues aspartate 7, glutamate 67, and aspartate 140 contribute to the active site. Mg(2+) is bound by residues aspartate 7, glutamate 67, and aspartate 140.

It belongs to the RuvC family. Homodimer which binds Holliday junction (HJ) DNA. The HJ becomes 2-fold symmetrical on binding to RuvC with unstacked arms; it has a different conformation from HJ DNA in complex with RuvA. In the full resolvosome a probable DNA-RuvA(4)-RuvB(12)-RuvC(2) complex forms which resolves the HJ. It depends on Mg(2+) as a cofactor.

Its subcellular location is the cytoplasm. The catalysed reaction is Endonucleolytic cleavage at a junction such as a reciprocal single-stranded crossover between two homologous DNA duplexes (Holliday junction).. Its function is as follows. The RuvA-RuvB-RuvC complex processes Holliday junction (HJ) DNA during genetic recombination and DNA repair. Endonuclease that resolves HJ intermediates. Cleaves cruciform DNA by making single-stranded nicks across the HJ at symmetrical positions within the homologous arms, yielding a 5'-phosphate and a 3'-hydroxyl group; requires a central core of homology in the junction. The consensus cleavage sequence is 5'-(A/T)TT(C/G)-3'. Cleavage occurs on the 3'-side of the TT dinucleotide at the point of strand exchange. HJ branch migration catalyzed by RuvA-RuvB allows RuvC to scan DNA until it finds its consensus sequence, where it cleaves and resolves the cruciform DNA. The sequence is that of Crossover junction endodeoxyribonuclease RuvC from Rickettsia rickettsii (strain Iowa).